The primary structure comprises 449 residues: Putative gustatory receptor 77a (449 aa).

At 1–27 (MPLPLGDPLALAVSPQLGYIRITAMPR) the chain is on the cytoplasmic side. Residues 28–50 (WLQLPGMSALGILYSLTRVFGLM) form a helical membrane-spanning segment. Topologically, residues 51 to 70 (ATANWSPRGIKRVRQSLYLR) are extracellular. A helical transmembrane segment spans residues 71–93 (IHGCVMLIFVGCFSPFAFWCIFQ). At 94–102 (RMAFLRQNR) the chain is on the cytoplasmic side. The chain crosses the membrane as a helical span at residues 103–125 (ILLMIGFNRYVLLLVCAFMTLWI). The Extracellular segment spans residues 126-205 (HCFKQAEIIG…VRRNFMYACS (80 aa)). The helical transmembrane segment at 206–228 (LVFVSVCQAILQLSLGMYTMAIL) threads the bilayer. The Cytoplasmic portion of the chain corresponds to 229–298 (FLGHLVRHSN…LLKLHRSICS (70 aa)). Residues 299–321 (LCAVQAVCFLGFVPLECTIHLFF) form a helical membrane-spanning segment. The Extracellular portion of the chain corresponds to 322-340 (TYFMKYSKFILRKYGRSFP). The helical transmembrane segment at 341–363 (LNYFAIAFLVGLFTNLLLVILPT) threads the bilayer. Over 364–420 (YYSERRFNCTREIIKGGGLAFPSRITVKQLRHTMHFYGLYLKNVEHVFAVSACGLFK) the chain is Cytoplasmic. A helical membrane pass occupies residues 421–443 (LNNAILFCIVGAILEYLMILIQF). The Extracellular portion of the chain corresponds to 444–449 (DKVLNK).

This sequence belongs to the insect chemoreceptor superfamily. Gustatory receptor (GR) family. Gr77a subfamily. As to expression, in larvae, is expressed in dorsal pharyngeal sense organ.

The protein resides in the cell membrane. Functionally, probable gustatory receptor which mediates acceptance or avoidance behavior, depending on its substrates. The sequence is that of Putative gustatory receptor 77a (Gr77a) from Drosophila melanogaster (Fruit fly).